We begin with the raw amino-acid sequence, 339 residues long: DNA-directed RNA polymerase subunit alpha (339 aa).

The tract at residues 1–233 is alpha N-terminal domain (alpha-NTD); the sequence is MVREEVAGST…DLFLPFLHAE (233 aa). The alpha C-terminal domain (alpha-CTD) stretch occupies residues 264–339; the sequence is KKGIPLNCIF…IDLLKNKLSF (76 aa).

This sequence belongs to the RNA polymerase alpha chain family. As to quaternary structure, in plastids the minimal PEP RNA polymerase catalytic core is composed of four subunits: alpha, beta, beta', and beta''. When a (nuclear-encoded) sigma factor is associated with the core the holoenzyme is formed, which can initiate transcription.

The protein localises to the plastid. It localises to the chloroplast. It carries out the reaction RNA(n) + a ribonucleoside 5'-triphosphate = RNA(n+1) + diphosphate. In terms of biological role, DNA-dependent RNA polymerase catalyzes the transcription of DNA into RNA using the four ribonucleoside triphosphates as substrates. The polypeptide is DNA-directed RNA polymerase subunit alpha (Elymus californicus (California bottlebrush grass)).